The primary structure comprises 416 residues: E3 ubiquitin-protein ligase makorin-2 (416 aa).

C3H1-type zinc fingers lie at residues 2 to 29 (STKQITCRYFMHGVCREGSQCLFSHDLA) and 31 to 58 (SKPSTICKYYQKGYCAYGTRCRYDHTRP). Residues 113 to 122 (NLSGMAERKT) show a composition bias toward basic and acidic residues. The segment at 113 to 142 (NLSGMAERKTQPSMVSNPGSCSDPQPSPEM) is disordered. The span at 123–136 (QPSMVSNPGSCSDP) shows a compositional bias: polar residues. Ser-139 bears the Phosphoserine mark. The C3H1-type 3 zinc-finger motif lies at 165–192 (SNEQQLCPYAAAGECRFGDACVYLHGEV). The tract at residues 193–222 (CEICRLQVLHPFDPEQRKAHEKICMLTFEH) is makorin-type Cys-His. The RING-type zinc-finger motif lies at 238–292 (CSICMEVILEKASASERRFGILSNCNHTYCLSCIRQWRCAKQFENPIIKSCPECR). The C3H1-type 4 zinc finger occupies 321–350 (GMGKKACKYFEQGKGTCPFGSKCLYRHAYP).

In terms of assembly, interacts with PDLIM2 (via LIM zinc-binding domain). Interacts with RELA. As to expression, expressed in sperm, with significantly reduced expression in sperm of patients with oligoasthenoteratozoospermia (at protein level). Widely expressed with expression in testis, ovary, small intestine, colon, peripheral blood leukocytes, fetal liver, bone marrow, thymus, lymph node and spleen.

The protein resides in the cytoplasm. Its subcellular location is the nucleus. It carries out the reaction S-ubiquitinyl-[E2 ubiquitin-conjugating enzyme]-L-cysteine + [acceptor protein]-L-lysine = [E2 ubiquitin-conjugating enzyme]-L-cysteine + N(6)-ubiquitinyl-[acceptor protein]-L-lysine.. It participates in protein modification; protein ubiquitination. Its function is as follows. E3 ubiquitin ligase catalyzing the covalent attachment of ubiquitin moieties onto substrate proteins. Promotes the polyubiquitination and proteasome-dependent degradation of RELA/p65, thereby suppressing RELA-mediated NF-kappaB transactivation and negatively regulating inflammatory responses. Plays a role in the regulation of spermiation and in male fertility. The chain is E3 ubiquitin-protein ligase makorin-2 (MKRN2) from Homo sapiens (Human).